A 126-amino-acid polypeptide reads, in one-letter code: Flagellar protein FliT (126 aa).

The required for homodimerization stretch occupies residues 1 to 50; the sequence is MASPHRLLKDYQQLLSLSQKILHLAVNGQWDTLVEQEIVYVQSVEGLVNT. Positions 60–98 are fliD binding; the sequence is MRLHLRQILQEVMDNEAKVKQLLQKRMDELSSLMGQSLK.

Belongs to the FliT family. As to quaternary structure, homodimer. Interacts with FliD and FlhC.

The protein localises to the cytoplasm. It localises to the cytosol. Dual-function protein that regulates the transcription of class 2 flagellar operons and that also acts as an export chaperone for the filament-capping protein FliD. As a transcriptional regulator, acts as an anti-FlhDC factor; it directly binds FlhC, thus inhibiting the binding of the FlhC/FlhD complex to class 2 promoters, resulting in decreased expression of class 2 flagellar operons. As a chaperone, effects FliD transition to the membrane by preventing its premature polymerization, and by directing it to the export apparatus. This Pectobacterium carotovorum subsp. carotovorum (strain PC1) protein is Flagellar protein FliT.